We begin with the raw amino-acid sequence, 1328 residues long: MIWYVATLIASVISTRGLVAQGAHGLREEPEFVTARAGEGVVLRCDVIHPVTGQPPPYVVEWFKFGVPIPIFIKFGYYPPHVDPEYAGRASLHDKASLRLEQVRSEDQGWYECKVLMLDQQYDTFHNGSWVHLTINAPPTFTETPPQYIEAKEGGSITMTCTAFGNPKPIVTWLKEGTLLGASAKYQVSDGSLTVTSVSREDRGAYTCRAYSIQGEAVHTTHLLVQGPPFIVSPPENITVNISQDALLTCRAEAYPGNLTYTWYWQDENVYFQNDLKLRVRILIDGTLIIFRVKPEDAGKYTCVPSNSLGRSPSASAYLTVQYPARVLNMPPVIYVPVGIHGYIRCPVDAEPPATVVKWNKDGRPLQVEKNLGWTLMEDGSIRIEEATEEALGTYTCVPYNTLGTMGQSAPARLVLKDPPYFTVLPGWEYRQEAGRELLIPCAAAGDPFPVITWRKVGKPSRSKHNALPSGSLQFRALSKEDHGEWECVATNVVTSITASTHLTVIGTSPHAPGSVRVHVSMTTANVSWEPGYDGGYEQTFSVWMKRAQFGPHDWLSLSVPPGPSWLLVDSLEPETAYQFSVLAQNRLGTSAFSEVVTVNTLAFPVTTPEPLVLVTPPRCLTANRTQQGVLLSWLPPANHSFPIDRYIMEFRVGERWEMLDDAIPGTDGDFFAKDLSQDTWYEFRVLAVMQDLISEPSNIAGVSSTDIFPQPDLTDDGLARPVLAGIVATICFLAAAILFSTLAACFVNKQRKRKLKRKKDPPLSITHCRKSLESPLSSGKVSPESIRTLRAPSESSDDQGQPAAKRMLSPTREKELSLYKKTKRAISSRKYSVAKAEAEAEATTPIELISRGPDGRFVMGPSEMEPSVKGRRIEGFPFAEETDMYPEFRQSDEENEDPLVPTSVAALKPQLTPMSSSQDSYLPPPAYSPRFQPRGLEGPSGLGGRLQATGQARPPAPRPFQHGQYYGYLSSSSPGEVEPPPFYMPEVGSPLSSVMSSPPLHTEGPFGHPTIPEENGENASNSTLPLTQTPTGGRSPEPWGRPEFPFGGLETPAMMFPHQLHPCDVAESLQPKACLPRGLPPAPLQVPAAYPGMLSLEAPKGWVGKSPGRGPIPAPPATKWQERPMQPLVSQGQLRHTSQGMGIPVLPYPEPAEPGGHGGPSTFGLDTRWYEPQPRPRPSPRQARRAEPSLHQVVLQPSRLSPLTQSPLSSRTGSPELAARARPRPGLLQQAEMSEITLQPPAAVSFSRKSTPSSTGSPSQSSRSGSPSYRPTMGFTTLATGYPSPPPGPAPPAPGDTLDVFGQTPSPRRMGEEPLRPEPPTTLPTSG.

The first 17 residues, 1 to 17 (MIWYVATLIASVISTRG), serve as a signal peptide directing secretion. The Extracellular portion of the chain corresponds to 18–722 (LVAQGAHGLR…DLTDDGLARP (705 aa)). Ig-like domains are found at residues 30–115 (PEFV…ECKV), 139–226 (PTFT…LLVQ), 228–320 (PPFI…AYLT), 324–415 (PARV…ARLV), and 420–504 (PYFT…THLT). 2 disulfide bridges follow: C45–C113 and C161–C208. N-linked (GlcNAc...) asparagine glycans are attached at residues N241 and N258. 3 disulfide bridges follow: C250–C303, C346–C397, and C442–C488. 2 Fibronectin type-III domains span residues 512-604 (APGS…TLAF) and 614-708 (LVTP…STDI). N-linked (GlcNAc...) asparagine glycosylation occurs at N624. Residues 723-743 (VLAGIVATICFLAAAILFSTL) form a helical membrane-spanning segment. The Cytoplasmic portion of the chain corresponds to 744–1328 (AACFVNKQRK…EPPTTLPTSG (585 aa)). Disordered stretches follow at residues 758 to 817 (RKKD…EKEL), 914 to 1040 (PMSS…PEPW), and 1106 to 1328 (KSPG…PTSG). S775, S783, and S794 each carry phosphoserine. The segment covering 990 to 1001 (SPLSSVMSSPPL) has biased composition (low complexity). Polar residues-rich tracts occupy residues 1018–1033 (ENAS…TPTG), 1129–1141 (LVSQ…TSQG), and 1199–1214 (SRLS…SRTG). R1136 carries the omega-N-methylarginine modification. S1207 and S1215 each carry phosphoserine. Positions 1246–1273 (SFSRKSTPSSTGSPSQSSRSGSPSYRPT) are enriched in low complexity. Composition is skewed to pro residues over residues 1284–1295 (PSPPPGPAPPAP) and 1318–1328 (PEPPTTLPTSG).

The protein belongs to the immunoglobulin superfamily. Turtle family. Found in a complex with MAGI2 and NLGN2, where it interacts with MAGI2 (via PDZ 5 and PDZ 6 domains). In terms of processing, N-glycosylated and sialylated. Not significantly O-glycosylated. In terms of tissue distribution, detected in brain.

Its subcellular location is the cell membrane. The protein localises to the postsynaptic cell membrane. It is found in the postsynaptic density. Transmembrane protein which is abundantly expressed in interneurons, where it may regulate inhibitory synapse development. May mediate homophilic cell adhesion. This is Protein turtle homolog B from Mus musculus (Mouse).